The following is a 457-amino-acid chain: Siroheme synthase (457 aa).

The tract at residues 1–204 is precorrin-2 dehydrogenase /sirohydrochlorin ferrochelatase; that stretch reads MDHLPIFCQL…NDQKAITETT (204 aa). Residues 22-23 and 43-44 contribute to the NAD(+) site; these read DV and LA. Position 128 is a phosphoserine (S128). The segment at 216-457 is uroporphyrinogen-III C-methyltransferase; it reads GEVVLVGAGP…RDKLNWFSNH (242 aa). P225 lines the S-adenosyl-L-methionine pocket. The active-site Proton acceptor is the D248. The active-site Proton donor is K270. S-adenosyl-L-methionine contacts are provided by residues 301-303, I306, 331-332, M382, and G411; these read GGD and TA.

In the N-terminal section; belongs to the precorrin-2 dehydrogenase / sirohydrochlorin ferrochelatase family. The protein in the C-terminal section; belongs to the precorrin methyltransferase family.

It carries out the reaction uroporphyrinogen III + 2 S-adenosyl-L-methionine = precorrin-2 + 2 S-adenosyl-L-homocysteine + H(+). It catalyses the reaction precorrin-2 + NAD(+) = sirohydrochlorin + NADH + 2 H(+). The enzyme catalyses siroheme + 2 H(+) = sirohydrochlorin + Fe(2+). It functions in the pathway cofactor biosynthesis; adenosylcobalamin biosynthesis; precorrin-2 from uroporphyrinogen III: step 1/1. Its pathway is cofactor biosynthesis; adenosylcobalamin biosynthesis; sirohydrochlorin from precorrin-2: step 1/1. The protein operates within porphyrin-containing compound metabolism; siroheme biosynthesis; precorrin-2 from uroporphyrinogen III: step 1/1. It participates in porphyrin-containing compound metabolism; siroheme biosynthesis; siroheme from sirohydrochlorin: step 1/1. It functions in the pathway porphyrin-containing compound metabolism; siroheme biosynthesis; sirohydrochlorin from precorrin-2: step 1/1. Its function is as follows. Multifunctional enzyme that catalyzes the SAM-dependent methylations of uroporphyrinogen III at position C-2 and C-7 to form precorrin-2 via precorrin-1. Then it catalyzes the NAD-dependent ring dehydrogenation of precorrin-2 to yield sirohydrochlorin. Finally, it catalyzes the ferrochelation of sirohydrochlorin to yield siroheme. This chain is Siroheme synthase, found in Escherichia coli O7:K1 (strain IAI39 / ExPEC).